Here is a 182-residue protein sequence, read N- to C-terminus: Early nodulin-like protein 10 (182 aa).

A signal peptide spans 1-20; the sequence is MSSVMMCCCLLLLFGLLSEG. The region spanning 21 to 125 is the Phytocyanin domain; sequence REILVGGKSN…GEKLRVVVLS (105 aa). N-linked (GlcNAc...) asparagine glycosylation is present at asparagine 65. The cysteines at positions 79 and 113 are disulfide-linked. 2 N-linked (GlcNAc...) asparagine glycosylation sites follow: asparagine 129 and asparagine 148. Residue asparagine 157 is the site of GPI-anchor amidated asparagine attachment. Positions 158-182 are cleaved as a propeptide — removed in mature form; sequence AHIMNKGSLNTAWSLLLLLPLGLLV.

This sequence belongs to the early nodulin-like (ENODL) family. Mostly expressed in flowers, and, to a lower extent, in leaves, but barely in seedlings, stems, seeds and roots.

It localises to the cell membrane. In terms of biological role, may act as a carbohydrate transporter. This Arabidopsis thaliana (Mouse-ear cress) protein is Early nodulin-like protein 10.